Reading from the N-terminus, the 308-residue chain is Small ribosomal subunit protein uS2 (308 aa).

Ser-2 carries the post-translational modification N-acetylserine. Laminin-binding regions lie at residues 161 to 180 and 205 to 229; these read IPCN…MLAR and RDPE…EFQG. 5 [DE]-W-[ST] repeats span residues 230–232, 245–247, 279–281, 288–290, and 306–308; these read EWT and DWS. The laminin-binding stretch occupies residues 242-308; sequence EVADWSEGVQ…DWGGATADWS (67 aa). Residues 262–308 form a disordered region; sequence AGIEAPGKPAPAEVYAEDWSAQPATEDWSAAPTAQAGDWGGATADWS.

Belongs to the universal ribosomal protein uS2 family. In terms of assembly, monomer (37LRP) and homodimer (67LR). Component of the small ribosomal subunit. Mature ribosomes consist of a small (40S) and a large (60S) subunit. The 40S subunit contains about 33 different proteins and 1 molecule of RNA (18S). The 60S subunit contains about 49 different proteins and 3 molecules of RNA (28S, 5.8S and 5S). Interacts with rps21. Interacts with several laminins including at least lamb1. Interacts with mdk. Post-translationally, acylated. Acylation may be a prerequisite for conversion of the monomeric 37 kDa laminin receptor precursor (37LRP) to the mature dimeric 67 kDa laminin receptor (67LR), and may provide a mechanism for membrane association. Cleaved by stromelysin-3 (ST3) at the cell surface. Cleavage by stromelysin-3 may be a mechanism to alter cell-extracellular matrix interactions.

The protein resides in the cell membrane. It localises to the cytoplasm. It is found in the nucleus. Required for the assembly and/or stability of the 40S ribosomal subunit. Required for the processing of the 20S rRNA-precursor to mature 18S rRNA in a late step of the maturation of 40S ribosomal subunits. Also functions as a cell surface receptor for laminin. Plays a role in cell adhesion to the basement membrane and in the consequent activation of signaling transduction pathways. May play a role in cell fate determination and tissue morphogenesis. The protein is Small ribosomal subunit protein uS2 (rpsa) of Danio rerio (Zebrafish).